The primary structure comprises 297 residues: Beta-1,3-galactosyltransferase 5 (297 aa).

The Cytoplasmic portion of the chain corresponds to 1-7; that stretch reads MAFPKMR. A helical; Signal-anchor for type II membrane protein transmembrane segment spans residues 8–28; the sequence is LMYVCLLVLGALCVYFSMYSL. Residues 29–297 are Lumenal-facing; sequence NLFKEQSFVY…KPRTLLDYWQ (269 aa). N-linked (GlcNAc...) asparagine glycosylation is found at Asn-130, Asn-174, and Asn-231.

It belongs to the glycosyltransferase 31 family.

The protein resides in the golgi apparatus membrane. The catalysed reaction is a globoside Gb4Cer (d18:1(4E)) + UDP-alpha-D-galactose = a globoside GalGb4Cer (d18:1(4E)) + UDP + H(+). It functions in the pathway protein modification; protein glycosylation. In terms of biological role, catalyzes the transfer of Gal to GlcNAc-based acceptors with a preference for the core3 O-linked glycan GlcNAc(beta1,3)GalNAc structure. Can use glycolipid LC3Cer as an efficient acceptor. The protein is Beta-1,3-galactosyltransferase 5 (B3GALT5) of Pan troglodytes (Chimpanzee).